The sequence spans 357 residues: Histidinol-phosphate aminotransferase (357 aa).

K212 carries the N6-(pyridoxal phosphate)lysine modification.

It belongs to the class-II pyridoxal-phosphate-dependent aminotransferase family. Histidinol-phosphate aminotransferase subfamily. As to quaternary structure, homodimer. Requires pyridoxal 5'-phosphate as cofactor.

It catalyses the reaction L-histidinol phosphate + 2-oxoglutarate = 3-(imidazol-4-yl)-2-oxopropyl phosphate + L-glutamate. Its pathway is amino-acid biosynthesis; L-histidine biosynthesis; L-histidine from 5-phospho-alpha-D-ribose 1-diphosphate: step 7/9. In Pectobacterium carotovorum subsp. carotovorum (strain PC1), this protein is Histidinol-phosphate aminotransferase.